Here is a 481-residue protein sequence, read N- to C-terminus: UDP-N-acetylmuramate--L-alanine ligase (481 aa).

123–129 (GTHGKTT) provides a ligand contact to ATP.

Belongs to the MurCDEF family.

It is found in the cytoplasm. It carries out the reaction UDP-N-acetyl-alpha-D-muramate + L-alanine + ATP = UDP-N-acetyl-alpha-D-muramoyl-L-alanine + ADP + phosphate + H(+). Its pathway is cell wall biogenesis; peptidoglycan biosynthesis. In terms of biological role, cell wall formation. The protein is UDP-N-acetylmuramate--L-alanine ligase of Pseudomonas fluorescens (strain SBW25).